A 428-amino-acid chain; its full sequence is Adenylosuccinate synthetase (428 aa).

GTP contacts are provided by residues glycine 12–lysine 18 and glycine 40–threonine 42. Aspartate 13 serves as the catalytic Proton acceptor. Mg(2+) is bound by residues aspartate 13 and glycine 40. Residues aspartate 13–lysine 16, asparagine 38–histidine 41, threonine 129, arginine 143, glutamine 224, threonine 239, and arginine 303 contribute to the IMP site. Histidine 41 (proton donor) is an active-site residue. Valine 299–arginine 305 lines the substrate pocket. GTP contacts are provided by residues arginine 305, lysine 331 to aspartate 333, and alanine 410 to glycine 412.

The protein belongs to the adenylosuccinate synthetase family. In terms of assembly, homodimer. It depends on Mg(2+) as a cofactor.

The protein resides in the cytoplasm. It catalyses the reaction IMP + L-aspartate + GTP = N(6)-(1,2-dicarboxyethyl)-AMP + GDP + phosphate + 2 H(+). It participates in purine metabolism; AMP biosynthesis via de novo pathway; AMP from IMP: step 1/2. In terms of biological role, plays an important role in the de novo pathway of purine nucleotide biosynthesis. Catalyzes the first committed step in the biosynthesis of AMP from IMP. The protein is Adenylosuccinate synthetase of Francisella tularensis subsp. holarctica (strain FTNF002-00 / FTA).